A 436-amino-acid polypeptide reads, in one-letter code: Protein 60A (436 aa).

The first 27 residues, 1–27 (MTASLVVLPSLWLILIIFTAPYTHCTQ), serve as a signal peptide directing secretion. The propeptide occupies 28-317 (SGIYIDNGKD…STLHQRKKSK (290 aa)). 4 N-linked (GlcNAc...) asparagine glycosylation sites follow: N102, N114, N217, and N229. Residues 293 to 322 (IKSTSGHSTQKRTKRSTLHQRKKSKSEPVN) form a disordered region. Basic residues predominate over residues 301–316 (TQKRTKRSTLHQRKKS). Disulfide bonds link C335-C401, C364-C433, and C368-C435. N-linked (GlcNAc...) asparagine glycosylation occurs at N377.

This sequence belongs to the TGF-beta family. Homodimer; disulfide-linked.

The protein resides in the secreted. The chain is Protein 60A (gbb) from Drosophila virilis (Fruit fly).